A 393-amino-acid polypeptide reads, in one-letter code: S-adenosylmethionine synthase (393 aa).

E9 contacts Mg(2+). H15 lines the ATP pocket. E43 serves as a coordination point for K(+). Residues E56 and Q99 each contribute to the L-methionine site. Residues 167–169, 235–238, D246, 252–253, A269, K273, and K277 each bind ATP; these read DGK, SGRF, and RK. D246 contacts L-methionine. Residue K277 participates in L-methionine binding.

It belongs to the AdoMet synthase family. Homotetramer. Mn(2+) is required as a cofactor. It depends on Mg(2+) as a cofactor. The cofactor is Co(2+). Requires K(+) as cofactor.

The protein resides in the cytoplasm. It carries out the reaction L-methionine + ATP + H2O = S-adenosyl-L-methionine + phosphate + diphosphate. The protein operates within amino-acid biosynthesis; S-adenosyl-L-methionine biosynthesis; S-adenosyl-L-methionine from L-methionine: step 1/1. In terms of biological role, catalyzes the formation of S-adenosylmethionine from methionine and ATP. The reaction comprises two steps that are both catalyzed by the same enzyme: formation of S-adenosylmethionine (AdoMet) and triphosphate, and subsequent hydrolysis of the triphosphate. In Litchi chinensis (Lychee), this protein is S-adenosylmethionine synthase (SAMS).